The primary structure comprises 1683 residues: E3 ubiquitin-protein ligase SHPRH (1683 aa).

Residues Met1–Pro43 form a disordered region. Residues Arg12–Glu32 show a composition bias toward basic and acidic residues. Ser266 is modified (phosphoserine). A Helicase ATP-binding; first part domain is found at Tyr307–Thr389. Asp373–Thr380 serves as a coordination point for ATP. The H15 domain maps to Gln438–Lys512. Residues Lys525–Ser607 form a disordered region. Residues Ile534–Asp547 are compositionally biased toward basic and acidic residues. Over residues Lys568–Lys588 the composition is skewed to basic residues. Ser635 carries the phosphoserine modification. Residues Arg658–Ala709 form a PHD-type zinc finger. One can recognise a Helicase ATP-binding; second part domain in the interval Met710–Glu868. The DEAQ box signature appears at Asp819 to Gln822. The RING-type zinc-finger motif lies at Cys1432–Arg1479. A Helicase C-terminal domain is found at Ala1514 to Ala1672.

It belongs to the SNF2/RAD54 helicase family. Homodimer. Interacts with HLTF, PCNA, UBE2N and RAD18. In terms of tissue distribution, broadly expressed.

It catalyses the reaction S-ubiquitinyl-[E2 ubiquitin-conjugating enzyme]-L-cysteine + [acceptor protein]-L-lysine = [E2 ubiquitin-conjugating enzyme]-L-cysteine + N(6)-ubiquitinyl-[acceptor protein]-L-lysine.. The protein operates within protein modification; protein ubiquitination. Functionally, E3 ubiquitin-protein ligase involved in DNA repair. Upon genotoxic stress, accepts ubiquitin from the UBE2N-UBE2V2 E2 complex and transfers it to 'Lys-164' of PCNA which had been monoubiquitinated by UBE2A/B-RAD18, promoting the formation of non-canonical poly-ubiquitin chains linked through 'Lys-63'. In Homo sapiens (Human), this protein is E3 ubiquitin-protein ligase SHPRH (SHPRH).